Consider the following 369-residue polypeptide: Anhydro-N-acetylmuramic acid kinase (369 aa).

12-19 is a binding site for ATP; that stretch reads GTSLDGVD.

Belongs to the anhydro-N-acetylmuramic acid kinase family.

The catalysed reaction is 1,6-anhydro-N-acetyl-beta-muramate + ATP + H2O = N-acetyl-D-muramate 6-phosphate + ADP + H(+). It participates in amino-sugar metabolism; 1,6-anhydro-N-acetylmuramate degradation. The protein operates within cell wall biogenesis; peptidoglycan recycling. Functionally, catalyzes the specific phosphorylation of 1,6-anhydro-N-acetylmuramic acid (anhMurNAc) with the simultaneous cleavage of the 1,6-anhydro ring, generating MurNAc-6-P. Is required for the utilization of anhMurNAc either imported from the medium or derived from its own cell wall murein, and thus plays a role in cell wall recycling. The chain is Anhydro-N-acetylmuramic acid kinase from Shigella flexneri.